The primary structure comprises 190 residues: Protein E6C (190 aa).

Pro residues predominate over residues 1–15 (MFGVAKPPPSPIPKP). Disordered stretches follow at residues 1–110 (MFGV…EGRR) and 160–190 (PRTP…PPDD). The span at 36–46 (ARQRASTRHRP) shows a compositional bias: basic residues. Composition is skewed to pro residues over residues 162–171 (TPGPVAPIPE) and 181–190 (TRTPPPPPDD).

The sequence is that of Protein E6C (13) from Equus caballus (Horse).